An 86-amino-acid chain; its full sequence is Apolipoprotein C-I (86 aa).

The signal sequence occupies residues 1–26; it reads MRLFLSLPVLVVVLLMILEGPGPAQG.

The protein belongs to the apolipoprotein C1 family.

The protein resides in the secreted. Inhibitor of lipoprotein binding to the low density lipoprotein (LDL) receptor, LDL receptor-related protein, and very low density lipoprotein (VLDL) receptor. Associates with high density lipoproteins (HDL) and the triacylglycerol-rich lipoproteins in the plasma and makes up about 10% of the protein of the VLDL and 2% of that of HDL. Appears to interfere directly with fatty acid uptake and is also the major plasma inhibitor of cholesteryl ester transfer protein (CETP). Binds free fatty acids and reduces their intracellular esterification. Modulates the interaction of APOE with beta-migrating VLDL and inhibits binding of beta-VLDL to the LDL receptor-related protein. This is Apolipoprotein C-I (APOC1) from Ateles geoffroyi (Black-handed spider monkey).